Here is a 458-residue protein sequence, read N- to C-terminus: Argininosuccinate lyase (458 aa).

Belongs to the lyase 1 family. Argininosuccinate lyase subfamily.

The protein localises to the cytoplasm. The enzyme catalyses 2-(N(omega)-L-arginino)succinate = fumarate + L-arginine. It participates in amino-acid biosynthesis; L-arginine biosynthesis; L-arginine from L-ornithine and carbamoyl phosphate: step 3/3. This chain is Argininosuccinate lyase, found in Salmonella choleraesuis (strain SC-B67).